The primary structure comprises 1508 residues: MFRNILSWFDSTPQPPPQQQEQQPEQPLEPPKVVSKNEARILTDQLPAPDSQRSQRYDRINNNKNNNNSNVDPLGNKDIFSSSPSTSTTTTTKSSSTTTTTTTSSSSNKQQPLYEDEPPLIVHELTSKGKRPPSPIFKEESSSQLILDTWEINSSDDESNSKNDFKGFMSQLESSNLNEKYITSNIYQKYEFFQKRDSEEDLFPSPEPIKKKQSNDLEKNIFDDDDDDDIFKNKQSTVTKPKQPQQQQKQPIVKKKVEEESLFGDSSLSLDSPLLASKSSPPKSSVNLSPQLFKEDSFDIDSFLSNDFDFKSKKSNNTTTVKKAVPISKSKPQQPPQKEEIKEVSTQKDNSNSNNNNGWVSVDEKPKERSTSKSKIGIQKTVTVKSNNSFENDIFGSTTTNDDGGDNDFSFTPATTPSSSSSTKATTTSPSSTTTTKSNINIGQKSNKSVDQADQFLNDIFQQEEQDKKRREEEAKLKQQQKQKEKEQIKDEIDDLFKFSKPTTTTTSTPSKSTTSIVDINSIEKKFSKSAANATTTNNDNNNNNNNTSSPTNKSTNLFNDWEKEEEIKVKEELDKKKKIEQEKKLEQEKKLIEEKKRIAEEKRISDEILAKKQLAEKLEKERIEKELEDLRLAKELEEKRLLALRQEKELAEKLKRERLEKEAEDKRIAQEIERKRLEKEKQDQLEKQRKLEQQRLQKEKDEKELADRLEKERIENEIKEKQKQLEKIKLEKELAEKKEKERLQKEADEKRIADQLEFERLLKLKQEKELAEKLEKERLEKEAAAEEKRIAAEKLEKQRLEKEAEEKRIAQDLERKRLEKEAEEKRIAQDLERKRLEKEAEEKRIAAEKLKQQQELAAKLEKERLEKEAEEKRIAQEKRIAEENRIAQEKKIAEELEKKRLQKEEQDRLAAAELERKRLEKEAEEKRIAQELEKKRLEKEAAEVKRIADEAAAAAKLEKERLEKEAEEKRIADEAAAAAKLEKERLEKEAAAAEEKRIADEAAAEAKLEKERLEKEKRIADEAAAEAAAALLQQKIEKEKEERDRIAKENKELKEKEDKERKEQRQRERQEKEQERARALKEKIEKEKERLNQQKLDQEKEEREREQRERKEQQEREENEKQLEKEREEKERREKLKQRNEQLEKERQERFKKDQEEKEKQLKEQQQQQKVIIPTTTTTTIRERSNSDSDALLNLPDSASSSSHSELVHLTLGRSKAKGRKKPTRRELTKDGNRNKQNIPNLKELKPSTVIIPDDDDDQSQKQQSEEVEEKPVAVKKMPIGFNPGMMMPKFDPSAVKLKSSAKPPSTNTTTTTTTAPQQPVQFNLKPVALKPTVTQTTTTTTTPPTTPPSSSVQLKPAATRSFSGSSFMGINSTTPTTPPTTPPSLKKSAAKDAGMKALDVLLQWLKDQTAGYEGVNIKDFTSSWYDGIAYLALVHRFKPSLIGDWKSFPKNDRVANYKLAFSLAEKHLGVTAFIDADDLAQLPSMERLSNITYLSEFFKVMKRGGF.

6 disordered regions span residues 1–165, 197–290, 309–518, 531–561, 680–706, and 1036–1391; these read MFRN…KNDF, DSEE…NLSP, DFKS…TSIV, AANA…LFND, KEKQ…EKEL, and KIEK…KKSA. Residues 81–107 are compositionally biased toward low complexity; that stretch reads SSSPSTSTTTTTKSSSTTTTTTTSSSS. Residues 208–222 are compositionally biased toward basic and acidic residues; it reads PIKKKQSNDLEKNIF. Low complexity-rich tracts occupy residues 234–251, 263–290, and 315–332; these read KQST…QKQP, FGDS…NLSP, and SNNT…KSKP. Composition is skewed to basic and acidic residues over residues 337-346 and 362-371; these read QKEEIKEVST and VDEKPKERST. The segment covering 380 to 391 has biased composition (polar residues); the sequence is KTVTVKSNNSFE. Low complexity predominate over residues 395–438; that stretch reads FGSTTTNDDGGDNDFSFTPATTPSSSSSTKATTTSPSSTTTTKS. Positions 439 to 452 are enriched in polar residues; sequence NINIGQKSNKSVDQ. Positions 455–498 form a coiled coil; sequence QFLNDIFQQEEQDKKRREEEAKLKQQQKQKEKEQIKDEIDDLFK. The span at 465-498 shows a compositional bias: basic and acidic residues; sequence EQDKKRREEEAKLKQQQKQKEKEQIKDEIDDLFK. 2 stretches are compositionally biased toward low complexity: residues 500–516 and 531–557; these read SKPT…STTS and AANA…KSTN. A compositionally biased stretch (basic and acidic residues) spans 1036–1164; the sequence is KIEKEKEERD…DQEEKEKQLK (129 aa). 2 stretches are compositionally biased toward low complexity: residues 1165-1181 and 1189-1206; these read EQQQ…TTTT and DSDA…SSHS. Residues 1216 to 1225 are compositionally biased toward basic residues; the sequence is SKAKGRKKPT. A compositionally biased stretch (basic and acidic residues) spans 1226-1235; the sequence is RRELTKDGNR. Residues 1333–1355 are compositionally biased toward low complexity; sequence PTVTQTTTTTTTPPTTPPSSSVQ. Polar residues predominate over residues 1362 to 1374; the sequence is RSFSGSSFMGINS. The Calponin-homology (CH) domain occupies 1397-1504; sequence MKALDVLLQW…YLSEFFKVMK (108 aa).

The chain is Calponin homology domain-containing protein DDB_G0272472 from Dictyostelium discoideum (Social amoeba).